We begin with the raw amino-acid sequence, 537 residues long: Chaperonin GroEL (537 aa).

ATP contacts are provided by residues 29–32 (TLGP), 86–90 (DGTTT), G413, and D492.

It belongs to the chaperonin (HSP60) family. In terms of assembly, forms a cylinder of 14 subunits composed of two heptameric rings stacked back-to-back. Interacts with the co-chaperonin GroES.

It localises to the cytoplasm. It catalyses the reaction ATP + H2O + a folded polypeptide = ADP + phosphate + an unfolded polypeptide.. Functionally, together with its co-chaperonin GroES, plays an essential role in assisting protein folding. The GroEL-GroES system forms a nano-cage that allows encapsulation of the non-native substrate proteins and provides a physical environment optimized to promote and accelerate protein folding. The sequence is that of Chaperonin GroEL from Dehalococcoides mccartyi (strain ATCC BAA-2266 / KCTC 15142 / 195) (Dehalococcoides ethenogenes (strain 195)).